Here is a 210-residue protein sequence, read N- to C-terminus: Na(+)-translocating NADH-quinone reductase subunit D (210 aa).

A run of 6 helical transmembrane segments spans residues 14–34, 42–62, 72–92, 103–123, 131–151, and 178–198; these read PIVS…ALAV, LVMT…ISIL, IIVQ…VLQA, VFVG…AYAM, FMDG…VGFI, and NGLL…IWII.

The protein belongs to the NqrDE/RnfAE family. In terms of assembly, composed of six subunits; NqrA, NqrB, NqrC, NqrD, NqrE and NqrF.

It is found in the cell inner membrane. The enzyme catalyses a ubiquinone + n Na(+)(in) + NADH + H(+) = a ubiquinol + n Na(+)(out) + NAD(+). Its function is as follows. NQR complex catalyzes the reduction of ubiquinone-1 to ubiquinol by two successive reactions, coupled with the transport of Na(+) ions from the cytoplasm to the periplasm. NqrA to NqrE are probably involved in the second step, the conversion of ubisemiquinone to ubiquinol. In Shewanella halifaxensis (strain HAW-EB4), this protein is Na(+)-translocating NADH-quinone reductase subunit D.